Reading from the N-terminus, the 263-residue chain is MDPEAANNGEPRRITSVLNAVEIIDAIKEHRGITLQELTTELDLTKATIHTYMATLRQVGIVEQDGDGTYQLGDWFVPVSNYARNSTDLYRLGREEIDKLATQTRHTAHLVTESDGRQIVLYESMGEESVTTEYHLRMRETPRKLHTSAAGKSILAFLPEGRRETLISEIEFGTESSTPIGSPDALREQLATVRDQGYAINDEEEIHGIRSIGAPIRGRTEDVAGAVSVTAPKTRLQNAEFAGEVPALVMEAANIIEVRLETA.

In terms of domain architecture, HTH iclR-type spans Ile14–Asp74. A DNA-binding region (H-T-H motif) is located at residues Leu35–Ala54. An IclR-ED domain is found at Leu89–Thr262.

Its function is as follows. Probably regulates transcription of the arcABC operon. The protein is Probable HTH-type transcriptional regulator ArcR (arcR) of Halobacterium salinarum (strain ATCC 29341 / DSM 671 / R1).